A 418-amino-acid chain; its full sequence is Putative ion-transport protein YfeO (418 aa).

Helical transmembrane passes span Leu-10 to Val-30, Asp-54 to Ile-74, Ala-99 to Pro-119, Glu-120 to Pro-140, Ile-149 to Ile-169, Leu-186 to Pro-206, Ile-223 to Cys-243, Val-258 to Val-278, Asp-300 to Phe-320, Gly-322 to His-342, Val-343 to Val-363, and Leu-371 to Met-391.

Belongs to the chloride channel (TC 2.A.49) family.

It localises to the cell membrane. The chain is Putative ion-transport protein YfeO from Escherichia coli O7:K1 (strain IAI39 / ExPEC).